The chain runs to 932 residues: Protocadherin gamma-A7 (932 aa).

The N-terminal stretch at 1 to 28 is a signal peptide; sequence MAAQPRGGDYRGFFLLSILLGTPWEAWA. 6 Cadherin domains span residues 29–133, 134–242, 243–347, 348–452, 453–562, and 570–682; these read GRIL…VPRF, LTEE…TPVF, SLPQ…APEV, TMTS…PPTF, PHSS…PPEI, and DGST…EPSD. The Extracellular portion of the chain corresponds to 29–692; sequence GRILYSVSEE…GPYNYDLTLY (664 aa). N-linked (GlcNAc...) asparagine glycosylation is found at asparagine 419 and asparagine 545. Residues 693–713 form a helical membrane-spanning segment; that stretch reads LVVAVATVSCVFLAFVLVLLA. The Cytoplasmic portion of the chain corresponds to 714-932; the sequence is LRLRRWHKSR…KKKSGKKEKK (219 aa). Disordered regions lie at residues 805–841 and 902–932; these read PSIQQAPPNTDWRFSQAQRPGTSGSQNGDDTGTWPNN and ATLTNAAGKRDGKAPAGGNGNKKKSGKKEKK. The segment covering 922 to 932 has biased composition (basic residues); that stretch reads NKKKSGKKEKK.

It is found in the cell membrane. Potential calcium-dependent cell-adhesion protein. May be involved in the establishment and maintenance of specific neuronal connections in the brain. The sequence is that of Protocadherin gamma-A7 (PCDHGA7) from Homo sapiens (Human).